Here is a 173-residue protein sequence, read N- to C-terminus: Lipoprotein signal peptidase (173 aa).

A run of 4 helical transmembrane segments spans residues 7-27, 41-61, 70-90, and 95-115; these read FFWF…LWVV, LWPG…FSLF, WLSL…PNFN, and AGYG…FVAG. Active-site residues include Asp-119 and Asp-135. The helical transmembrane segment at 130-150 threads the bilayer; that stretch reads IFNLADVFINIGIICLLIAAW.

This sequence belongs to the peptidase A8 family.

Its subcellular location is the cell inner membrane. The catalysed reaction is Release of signal peptides from bacterial membrane prolipoproteins. Hydrolyzes -Xaa-Yaa-Zaa-|-(S,diacylglyceryl)Cys-, in which Xaa is hydrophobic (preferably Leu), and Yaa (Ala or Ser) and Zaa (Gly or Ala) have small, neutral side chains.. Its pathway is protein modification; lipoprotein biosynthesis (signal peptide cleavage). This protein specifically catalyzes the removal of signal peptides from prolipoproteins. The protein is Lipoprotein signal peptidase of Cyanothece sp. (strain PCC 7425 / ATCC 29141).